The chain runs to 306 residues: Ribosomal protein L11 methyltransferase (306 aa).

The S-adenosyl-L-methionine site is built by Thr152, Gly179, Asp201, and Asn243.

It belongs to the methyltransferase superfamily. PrmA family.

It localises to the cytoplasm. The enzyme catalyses L-lysyl-[protein] + 3 S-adenosyl-L-methionine = N(6),N(6),N(6)-trimethyl-L-lysyl-[protein] + 3 S-adenosyl-L-homocysteine + 3 H(+). Its function is as follows. Methylates ribosomal protein L11. This chain is Ribosomal protein L11 methyltransferase, found in Citrifermentans bemidjiense (strain ATCC BAA-1014 / DSM 16622 / JCM 12645 / Bem) (Geobacter bemidjiensis).